Consider the following 303-residue polypeptide: Tumor necrosis factor receptor type 1-associated DEATH domain protein (303 aa).

The Nuclear export signal signature appears at 141-157 (QKDDELAEIDERLKSIK). The Death domain maps to 208-298 (TSAHIQHFAK…SIALDLLSLN (91 aa)). The short motif at 224–237 (KPVGRSLGKTCRAL) is the Nuclear localization signal element.

In terms of assembly, heterodimer with tnfrsf1a.

It localises to the nucleus. The protein resides in the cytoplasm. The protein localises to the cytoskeleton. Functionally, adapter molecule for tnfrsf1a that specifically associates with the cytoplasmic domain of activated tnfrsf1a mediating its interaction with fadd. The polypeptide is Tumor necrosis factor receptor type 1-associated DEATH domain protein (Xenopus laevis (African clawed frog)).